The sequence spans 62 residues: Photosystem II reaction center protein Z (62 aa).

2 helical membrane passes run 8 to 28 (AVFA…VVLA) and 41 to 61 (FSGA…NSFI).

This sequence belongs to the PsbZ family. As to quaternary structure, PSII is composed of 1 copy each of membrane proteins PsbA, PsbB, PsbC, PsbD, PsbE, PsbF, PsbH, PsbI, PsbJ, PsbK, PsbL, PsbM, PsbT, PsbY, PsbZ, Psb30/Ycf12, at least 3 peripheral proteins of the oxygen-evolving complex and a large number of cofactors. It forms dimeric complexes.

Its subcellular location is the plastid. The protein localises to the chloroplast thylakoid membrane. Functionally, may control the interaction of photosystem II (PSII) cores with the light-harvesting antenna, regulates electron flow through the 2 photosystem reaction centers. PSII is a light-driven water plastoquinone oxidoreductase, using light energy to abstract electrons from H(2)O, generating a proton gradient subsequently used for ATP formation. This Anthoceros angustus (Hornwort) protein is Photosystem II reaction center protein Z.